The sequence spans 185 residues: Ribosome-recycling factor (185 aa).

The protein belongs to the RRF family.

The protein localises to the cytoplasm. Its function is as follows. Responsible for the release of ribosomes from messenger RNA at the termination of protein biosynthesis. May increase the efficiency of translation by recycling ribosomes from one round of translation to another. The polypeptide is Ribosome-recycling factor (Methylococcus capsulatus (strain ATCC 33009 / NCIMB 11132 / Bath)).